The sequence spans 262 residues: uncharacterized protein (262 aa).

This sequence belongs to the glycosyltransferase 2 family.

This is an uncharacterized protein from Mycobacterium tuberculosis (strain CDC 1551 / Oshkosh).